Here is a 239-residue protein sequence, read N- to C-terminus: 4-hydroxy-tetrahydrodipicolinate reductase (239 aa).

NAD(+) contacts are provided by residues 9-14 (GINGKI), 78-80 (GTT), and 104-107 (APNF). The Proton donor/acceptor role is filled by His-134. Position 135 (His-135) interacts with (S)-2,3,4,5-tetrahydrodipicolinate. Lys-138 (proton donor) is an active-site residue. 144 to 145 (GT) provides a ligand contact to (S)-2,3,4,5-tetrahydrodipicolinate.

It belongs to the DapB family.

It localises to the cytoplasm. It carries out the reaction (S)-2,3,4,5-tetrahydrodipicolinate + NAD(+) + H2O = (2S,4S)-4-hydroxy-2,3,4,5-tetrahydrodipicolinate + NADH + H(+). It catalyses the reaction (S)-2,3,4,5-tetrahydrodipicolinate + NADP(+) + H2O = (2S,4S)-4-hydroxy-2,3,4,5-tetrahydrodipicolinate + NADPH + H(+). It functions in the pathway amino-acid biosynthesis; L-lysine biosynthesis via DAP pathway; (S)-tetrahydrodipicolinate from L-aspartate: step 4/4. Its function is as follows. Catalyzes the conversion of 4-hydroxy-tetrahydrodipicolinate (HTPA) to tetrahydrodipicolinate. The polypeptide is 4-hydroxy-tetrahydrodipicolinate reductase (Coxiella burnetii (strain CbuG_Q212) (Coxiella burnetii (strain Q212))).